The following is a 579-amino-acid chain: MTPSLVFLIVVIVVVEGQGWRPWDRFNHPGNFGNWGGNNWGTRQRNQEPHDIPPPVPPPGFRGNNDRFGGNIIKVVEIIDLGKSKNRGDILSDFKDVHKKHRHLGRKEWKGKVKQFCHRFPGHPNCRRGKVPDQKELEEMIGQFSKGGIGRFLKRVPKIYIEDPLARVDPKLKGFLENAGRGFGHVSSEHVNKLRDICKRRKCREQPESAKKTRELFTQKLADFETKIAGKDKTDSVQLRFDRTLQIKEALLEKGNLTADIVPVDNGVYDLDTMLTEEQANILLNELNKAGVGDDEIPLPDADTDDEDDDDSTNSASGAAPGSSRLKKSALYFEGNLIKKWDPSSPIRYVLDSSLEDLDKNDVRAAIYEIEKNTCIRFKELSSPPTGSHIVYYKVDSPTFCGLSYVGRADPANPVYLSFGCDNNKGVAIHETMHALGVAHQHLRNDRDQFITINWSNIDPQQYDAFVVVDSKLYTSYGVKYAYDSIMHYNGYTAAQNIAIPTMNPKTNSAVNLKVLGQRQKMGTTDIELLKKMYCQPGCDDKNVYCGAWALKDLCKNPGHDQYMAANCKKSCGLCAIGK.

A signal peptide spans 1-17; it reads MTPSLVFLIVVIVVVEG. The propeptide occupies 18 to 328; sequence QGWRPWDRFN…AAPGSSRLKK (311 aa). Residues 35-58 are disordered; the sequence is WGGNNWGTRQRNQEPHDIPPPVPP. N256 carries an N-linked (GlcNAc...) asparagine glycan. Residues 293-312 are compositionally biased toward acidic residues; sequence GDDEIPLPDADTDDEDDDDS. Positions 293–323 are disordered; that stretch reads GDDEIPLPDADTDDEDDDDSTNSASGAAPGS. Residues 329-536 form the Peptidase M12A domain; it reads SALYFEGNLI…IELLKKMYCQ (208 aa). Intrachain disulfides connect C375-C535, C401-C421, C539-C575, C546-C568, and C555-C572. Position 430 (H430) interacts with Zn(2+). The active site involves E431. Residues H434 and H440 each contribute to the Zn(2+) site. N-linked (GlcNAc...) asparagine glycosylation occurs at N454. The 37-residue stretch at 539-575 folds into the ShKT domain; it reads CDDKNVYCGAWALKDLCKNPGHDQYMAANCKKSCGLC.

Zn(2+) serves as cofactor. Expressed in the anterior part of the intestine, CEP neurons and to a lesser extent in hypodermis.

The protein resides in the secreted. In terms of biological role, metalloprotease. The polypeptide is Zinc metalloproteinase nas-11 (nas-11) (Caenorhabditis elegans).